The primary structure comprises 377 residues: MDESFDAFEIKPNSSIIEHFNNHPTCIDKEFNFILQKTELRALETDKFRSALEAKNKLKNRYSNVLPFEETRVKINIDDDDDDEDDNEDDIIVSNNNNNNNNNEKRIKRNSIGSSGQSDVMSNSSDEEDHGGSGDEGTTLSDYINASFINNGTYICTQGPLLNTIVDFWKMIWEQNSNIIVMLTREEENFKTKCDKYWPDKDEERYGNFIVKFDNNITIPDILIRREFTLENLKDNKTRKIYHFQYTTWPDHGTPVSTTGFLKFVSFVDHEKRSGPIVVHCSAGIGRSGTFVAIHSIVAKFAKHYDEKKQAPSINLPKLVVEMRNERPGMVQTRDQYRFCYLAISEAMNTVLKKEQKKRKGLSYSYSSIPLTGPEHD.

Residues 27-347 form the Tyrosine-protein phosphatase domain; the sequence is IDKEFNFILQ…RFCYLAISEA (321 aa). The tract at residues 77–137 is disordered; sequence IDDDDDDEDD…EDHGGSGDEG (61 aa). A compositionally biased stretch (acidic residues) spans 78 to 91; sequence DDDDDDEDDNEDDI. Residues 92-102 are compositionally biased toward low complexity; the sequence is IVSNNNNNNNN. The segment covering 113 to 123 has biased composition (polar residues); the sequence is GSSGQSDVMSN. Cys281 (phosphocysteine intermediate) is an active-site residue.

This sequence belongs to the protein-tyrosine phosphatase family. Non-receptor class subfamily.

It carries out the reaction O-phospho-L-tyrosyl-[protein] + H2O = L-tyrosyl-[protein] + phosphate. In Dictyostelium discoideum (Social amoeba), this protein is Tyrosine-protein phosphatase 2 (ptpB).